We begin with the raw amino-acid sequence, 341 residues long: AB hydrolase superfamily protein C1039.03 (341 aa).

It belongs to the AB hydrolase superfamily.

The protein localises to the cytoplasm. It localises to the nucleus. The sequence is that of AB hydrolase superfamily protein C1039.03 from Schizosaccharomyces pombe (strain 972 / ATCC 24843) (Fission yeast).